Reading from the N-terminus, the 217-residue chain is Adenylate kinase (217 aa).

Position 10-15 (Gly-10–Thr-15) interacts with ATP. The segment at Ser-30 to Val-59 is NMP. Residues Thr-31, Arg-36, Ala-57 to Val-59, Gly-85 to Arg-88, and Gln-92 contribute to the AMP site. The interval Gly-126–Asp-163 is LID. Arg-127 lines the ATP pocket. Positions 130, 133, 150, and 153 each coordinate Zn(2+). AMP-binding residues include Arg-160 and Arg-171. Glu-199 is a binding site for ATP.

The protein belongs to the adenylate kinase family. Monomer.

Its subcellular location is the cytoplasm. The catalysed reaction is AMP + ATP = 2 ADP. It participates in purine metabolism; AMP biosynthesis via salvage pathway; AMP from ADP: step 1/1. In terms of biological role, catalyzes the reversible transfer of the terminal phosphate group between ATP and AMP. Plays an important role in cellular energy homeostasis and in adenine nucleotide metabolism. The protein is Adenylate kinase of Geobacter sulfurreducens (strain ATCC 51573 / DSM 12127 / PCA).